Reading from the N-terminus, the 444-residue chain is Trigger factor (444 aa).

The 86-residue stretch at 163-248 (GDFLTVDFVG…AKALKKAVAP (86 aa)) folds into the PPIase FKBP-type domain.

This sequence belongs to the FKBP-type PPIase family. Tig subfamily.

The protein resides in the cytoplasm. It carries out the reaction [protein]-peptidylproline (omega=180) = [protein]-peptidylproline (omega=0). Involved in protein export. Acts as a chaperone by maintaining the newly synthesized protein in an open conformation. Functions as a peptidyl-prolyl cis-trans isomerase. This Granulibacter bethesdensis (strain ATCC BAA-1260 / CGDNIH1) protein is Trigger factor.